The primary structure comprises 359 residues: Nicotinate-nucleotide--dimethylbenzimidazole phosphoribosyltransferase (359 aa).

The Proton acceptor role is filled by Glu-318.

It belongs to the CobT family. Homodimer.

It carries out the reaction 5,6-dimethylbenzimidazole + nicotinate beta-D-ribonucleotide = alpha-ribazole 5'-phosphate + nicotinate + H(+). It functions in the pathway nucleoside biosynthesis; alpha-ribazole biosynthesis; alpha-ribazole from 5,6-dimethylbenzimidazole: step 1/2. Its function is as follows. Catalyzes the synthesis of alpha-ribazole-5'-phosphate from nicotinate mononucleotide (NAMN) and 5,6-dimethylbenzimidazole (DMB). In Shigella sonnei (strain Ss046), this protein is Nicotinate-nucleotide--dimethylbenzimidazole phosphoribosyltransferase.